The primary structure comprises 228 residues: DNA repair and recombination protein RadB (228 aa).

It belongs to the eukaryotic RecA-like protein family. RadB subfamily.

Involved in DNA repair and in homologous recombination. May regulate the cleavage reactions of the branch-structured DNA. Has a very weak ATPase activity that is not stimulated by DNA. Binds DNA but does not promote DNA strands exchange. The protein is DNA repair and recombination protein RadB of Thermococcus sibiricus (strain DSM 12597 / MM 739).